Consider the following 210-residue polypeptide: Vacuolar protein sorting-associated protein 28 homolog (210 aa).

One can recognise a VPS28 N-terminal domain in the interval 1–106 (MSSQNANLMR…REGRPITVKD (106 aa)). Residues 110-206 (NVLKHIASIV…AYQAFNKALN (97 aa)) form the VPS28 C-terminal domain.

It belongs to the VPS28 family. Component of the ESCRT-I complex (endosomal sorting complex required for transport I). In terms of tissue distribution, expressed in embryos.

The protein localises to the endosome. Its function is as follows. Component of the ESCRT-I complex, a regulator of vesicular trafficking process. The protein is Vacuolar protein sorting-associated protein 28 homolog (vps-28) of Caenorhabditis elegans.